The primary structure comprises 127 residues: Small ribosomal subunit protein uS12 (127 aa).

D89 bears the 3-methylthioaspartic acid mark. Positions L102–K127 are disordered. Residues G113–K127 are compositionally biased toward basic residues.

Belongs to the universal ribosomal protein uS12 family. Part of the 30S ribosomal subunit. Contacts proteins S8 and S17. May interact with IF1 in the 30S initiation complex.

Functionally, with S4 and S5 plays an important role in translational accuracy. Interacts with and stabilizes bases of the 16S rRNA that are involved in tRNA selection in the A site and with the mRNA backbone. Located at the interface of the 30S and 50S subunits, it traverses the body of the 30S subunit contacting proteins on the other side and probably holding the rRNA structure together. The combined cluster of proteins S8, S12 and S17 appears to hold together the shoulder and platform of the 30S subunit. The polypeptide is Small ribosomal subunit protein uS12 (Nostoc punctiforme (strain ATCC 29133 / PCC 73102)).